An 878-amino-acid chain; its full sequence is Aconitate hydratase A (878 aa).

The [4Fe-4S] cluster site is built by C426, C492, and C495.

It belongs to the aconitase/IPM isomerase family. As to quaternary structure, monomer. [4Fe-4S] cluster is required as a cofactor.

The catalysed reaction is citrate = D-threo-isocitrate. It catalyses the reaction (2S,3R)-3-hydroxybutane-1,2,3-tricarboxylate = 2-methyl-cis-aconitate + H2O. It functions in the pathway carbohydrate metabolism; tricarboxylic acid cycle; isocitrate from oxaloacetate: step 2/2. Its pathway is organic acid metabolism; propanoate degradation. Involved in the catabolism of short chain fatty acids (SCFA) via the tricarboxylic acid (TCA)(acetyl degradation route) and probably the 2-methylcitrate cycle I (propionate degradation route). Catalyzes the reversible isomerization of citrate to isocitrate via cis-aconitate. Could catalyze the hydration of 2-methyl-cis-aconitate to yield (2R,3S)-2-methylisocitrate. The apo form of AcnA functions as a RNA-binding regulatory protein. The chain is Aconitate hydratase A (acnA) from Rickettsia typhi (strain ATCC VR-144 / Wilmington).